Consider the following 100-residue polypeptide: Putative pterin-4-alpha-carbinolamine dehydratase (100 aa).

The protein belongs to the pterin-4-alpha-carbinolamine dehydratase family.

It catalyses the reaction (4aS,6R)-4a-hydroxy-L-erythro-5,6,7,8-tetrahydrobiopterin = (6R)-L-erythro-6,7-dihydrobiopterin + H2O. This is Putative pterin-4-alpha-carbinolamine dehydratase from Alteromonas mediterranea (strain DSM 17117 / CIP 110805 / LMG 28347 / Deep ecotype).